Here is a 183-residue protein sequence, read N- to C-terminus: Potassium-transporting ATPase KdpC subunit (183 aa).

A helical membrane pass occupies residues Leu10–Ala30.

It belongs to the KdpC family. In terms of assembly, the system is composed of three essential subunits: KdpA, KdpB and KdpC.

It is found in the cell inner membrane. Part of the high-affinity ATP-driven potassium transport (or Kdp) system, which catalyzes the hydrolysis of ATP coupled with the electrogenic transport of potassium into the cytoplasm. This subunit acts as a catalytic chaperone that increases the ATP-binding affinity of the ATP-hydrolyzing subunit KdpB by the formation of a transient KdpB/KdpC/ATP ternary complex. The sequence is that of Potassium-transporting ATPase KdpC subunit from Flavobacterium johnsoniae (strain ATCC 17061 / DSM 2064 / JCM 8514 / BCRC 14874 / CCUG 350202 / NBRC 14942 / NCIMB 11054 / UW101) (Cytophaga johnsonae).